Here is a 287-residue protein sequence, read N- to C-terminus: ATP synthase gamma chain (287 aa).

This sequence belongs to the ATPase gamma chain family. F-type ATPases have 2 components, CF(1) - the catalytic core - and CF(0) - the membrane proton channel. CF(1) has five subunits: alpha(3), beta(3), gamma(1), delta(1), epsilon(1). CF(0) has three main subunits: a, b and c.

The protein resides in the cell inner membrane. Its function is as follows. Produces ATP from ADP in the presence of a proton gradient across the membrane. The gamma chain is believed to be important in regulating ATPase activity and the flow of protons through the CF(0) complex. This chain is ATP synthase gamma chain, found in Proteus mirabilis (strain HI4320).